The chain runs to 427 residues: 3-phosphoshikimate 1-carboxyvinyltransferase (427 aa).

Residues lysine 22, serine 23, and arginine 27 each contribute to the 3-phosphoshikimate site. Phosphoenolpyruvate is bound at residue lysine 22. Phosphoenolpyruvate contacts are provided by glycine 96 and arginine 124. Residues serine 169, serine 170, glutamine 171, serine 197, aspartate 313, asparagine 336, and lysine 340 each contribute to the 3-phosphoshikimate site. Glutamine 171 contributes to the phosphoenolpyruvate binding site. Residue aspartate 313 is the Proton acceptor of the active site. The phosphoenolpyruvate site is built by arginine 344, arginine 386, and lysine 411.

This sequence belongs to the EPSP synthase family. In terms of assembly, monomer.

The protein localises to the cytoplasm. It carries out the reaction 3-phosphoshikimate + phosphoenolpyruvate = 5-O-(1-carboxyvinyl)-3-phosphoshikimate + phosphate. The protein operates within metabolic intermediate biosynthesis; chorismate biosynthesis; chorismate from D-erythrose 4-phosphate and phosphoenolpyruvate: step 6/7. In terms of biological role, catalyzes the transfer of the enolpyruvyl moiety of phosphoenolpyruvate (PEP) to the 5-hydroxyl of shikimate-3-phosphate (S3P) to produce enolpyruvyl shikimate-3-phosphate and inorganic phosphate. In Salmonella dublin (strain CT_02021853), this protein is 3-phosphoshikimate 1-carboxyvinyltransferase.